A 495-amino-acid chain; its full sequence is Phosphomethylpyrimidine synthase (495 aa).

Substrate is bound by residues N125, M154, Y183, H219, 239–241 (SRG), 280–283 (DGLR), and E319. Residue H323 participates in Zn(2+) binding. A substrate-binding site is contributed by Y346. H387 is a Zn(2+) binding site. C467, C470, and C475 together coordinate [4Fe-4S] cluster.

It belongs to the ThiC family. The cofactor is [4Fe-4S] cluster.

It catalyses the reaction 5-amino-1-(5-phospho-beta-D-ribosyl)imidazole + S-adenosyl-L-methionine = 4-amino-2-methyl-5-(phosphooxymethyl)pyrimidine + CO + 5'-deoxyadenosine + formate + L-methionine + 3 H(+). It functions in the pathway cofactor biosynthesis; thiamine diphosphate biosynthesis. Catalyzes the synthesis of the hydroxymethylpyrimidine phosphate (HMP-P) moiety of thiamine from aminoimidazole ribotide (AIR) in a radical S-adenosyl-L-methionine (SAM)-dependent reaction. This is Phosphomethylpyrimidine synthase from Leptospira interrogans serogroup Icterohaemorrhagiae serovar copenhageni (strain Fiocruz L1-130).